A 992-amino-acid chain; its full sequence is Probable RNA-dependent RNA polymerase 3 (992 aa).

The disordered stretch occupies residues 88–113; sequence PRLSPGESPVQSPRTPAKKSCRASQD.

Belongs to the RdRP family.

The catalysed reaction is RNA(n) + a ribonucleoside 5'-triphosphate = RNA(n+1) + diphosphate. In terms of biological role, probably involved in the RNA silencing pathway and required for the generation of small interfering RNAs (siRNAs). The chain is Probable RNA-dependent RNA polymerase 3 (RDR3) from Arabidopsis thaliana (Mouse-ear cress).